Reading from the N-terminus, the 232-residue chain is Chalcone--flavanone isomerase (232 aa).

The substrate site is built by Thr-50 and Ser-192.

It belongs to the chalcone isomerase family.

The catalysed reaction is a chalcone = a flavanone.. It functions in the pathway secondary metabolite biosynthesis; flavonoid biosynthesis. In terms of biological role, catalyzes the intramolecular cyclization of bicyclic chalcones into tricyclic (S)-flavanones. Responsible for the isomerization of 4,2',4',6'-tetrahydroxychalcone (also termed chalcone) into naringenin. The sequence is that of Chalcone--flavanone isomerase (CHI) from Saussurea medusa (Saw-wort).